The primary structure comprises 158 residues: NAD(P)H-quinone oxidoreductase subunit N (158 aa).

Belongs to the complex I NdhN subunit family. As to quaternary structure, NDH-1 can be composed of about 15 different subunits; different subcomplexes with different compositions have been identified which probably have different functions.

Its subcellular location is the cellular thylakoid membrane. The enzyme catalyses a plastoquinone + NADH + (n+1) H(+)(in) = a plastoquinol + NAD(+) + n H(+)(out). It carries out the reaction a plastoquinone + NADPH + (n+1) H(+)(in) = a plastoquinol + NADP(+) + n H(+)(out). Functionally, NDH-1 shuttles electrons from an unknown electron donor, via FMN and iron-sulfur (Fe-S) centers, to quinones in the respiratory and/or the photosynthetic chain. The immediate electron acceptor for the enzyme in this species is believed to be plastoquinone. Couples the redox reaction to proton translocation, and thus conserves the redox energy in a proton gradient. Cyanobacterial NDH-1 also plays a role in inorganic carbon-concentration. This chain is NAD(P)H-quinone oxidoreductase subunit N, found in Microcystis aeruginosa (strain NIES-843 / IAM M-2473).